The following is a 423-amino-acid chain: Histidine--tRNA ligase (423 aa).

It belongs to the class-II aminoacyl-tRNA synthetase family. In terms of assembly, homodimer.

It localises to the cytoplasm. It carries out the reaction tRNA(His) + L-histidine + ATP = L-histidyl-tRNA(His) + AMP + diphosphate + H(+). This chain is Histidine--tRNA ligase, found in Bacillus cytotoxicus (strain DSM 22905 / CIP 110041 / 391-98 / NVH 391-98).